A 356-amino-acid chain; its full sequence is Probable neutral protease 2 homolog TRV_06370 (356 aa).

The first 17 residues, 1–17 (MQFTALLAALGAPLALA), serve as a signal peptide directing secretion. The propeptide occupies 18–183 (ASIPAAAHNH…DDSTGVIDKR (166 aa)). Disulfide bonds link Cys191/Cys262 and Cys269/Cys287. His311 provides a ligand contact to Zn(2+). Glu312 is a catalytic residue. His315 and Asp326 together coordinate Zn(2+).

The protein belongs to the peptidase M35 family. Zn(2+) serves as cofactor.

The protein localises to the secreted. The catalysed reaction is Preferential cleavage of bonds with hydrophobic residues in P1'. Also 3-Asn-|-Gln-4 and 8-Gly-|-Ser-9 bonds in insulin B chain.. Probable secreted metalloprotease that shows high activities on basic nuclear substrates such as histone and protamine. May be involved in virulence. This Trichophyton verrucosum (strain HKI 0517) protein is Probable neutral protease 2 homolog TRV_06370.